Reading from the N-terminus, the 362-residue chain is MLLEFALWLGQDIRAFNVFGYITLRTVMAAMTALLISFACGPAVIRWLAAKKIGQAVRDDGPKSHLTKAGTPTMGGALIIIAIAVTTLLWGDLRNQYVWVTLLVTLGFGAVGWVDDWRKVVHRDPKGLASRWKYLWTSLIALAAALFLGLTANEPAQTELIVPFFKAVSYPLGMLGFVALSYFVINGTSHSVNLTDGLDGLAIMPTVMVAGALAIFAYVAGHAGFSKYLGVPYIAGAGELAVFCGALAGAGLGFLWFNAYPAEVFMGDVGALALGAALGTVAVVVRQEIVLFIMGGLFVAETLSVMVQVLYFKASGGKRIFRMAPLHHHYELGGWKETQVVVRFWIITIMLVLFGLSTLKLR.

Transmembrane regions (helical) follow at residues 27–47 (VMAA…VIRW), 73–93 (TMGG…WGDL), 97–117 (YVWV…VDDW), 132–152 (WKYL…GLTA), 160–180 (LIVP…FVAL), 200–220 (GLAI…AYVA), 237–257 (AGEL…FLWF), 264–284 (VFMG…VAVV), 289–309 (IVLF…MVQV), and 339–359 (QVVV…LSTL).

It belongs to the glycosyltransferase 4 family. MraY subfamily. The cofactor is Mg(2+).

Its subcellular location is the cell inner membrane. The enzyme catalyses UDP-N-acetyl-alpha-D-muramoyl-L-alanyl-gamma-D-glutamyl-meso-2,6-diaminopimeloyl-D-alanyl-D-alanine + di-trans,octa-cis-undecaprenyl phosphate = di-trans,octa-cis-undecaprenyl diphospho-N-acetyl-alpha-D-muramoyl-L-alanyl-D-glutamyl-meso-2,6-diaminopimeloyl-D-alanyl-D-alanine + UMP. It functions in the pathway cell wall biogenesis; peptidoglycan biosynthesis. Functionally, catalyzes the initial step of the lipid cycle reactions in the biosynthesis of the cell wall peptidoglycan: transfers peptidoglycan precursor phospho-MurNAc-pentapeptide from UDP-MurNAc-pentapeptide onto the lipid carrier undecaprenyl phosphate, yielding undecaprenyl-pyrophosphoryl-MurNAc-pentapeptide, known as lipid I. This is Phospho-N-acetylmuramoyl-pentapeptide-transferase from Aromatoleum aromaticum (strain DSM 19018 / LMG 30748 / EbN1) (Azoarcus sp. (strain EbN1)).